Consider the following 453-residue polypeptide: Ribosomal protein uS12 methylthiotransferase RimO (453 aa).

Residues 6 to 116 (PTVGIVSLGC…VLTAVHEAIA (111 aa)) form the MTTase N-terminal domain. C15, C51, C80, C148, C152, and C155 together coordinate [4Fe-4S] cluster. One can recognise a Radical SAM core domain in the interval 134–371 (LTPKHFAYLK…MQLQQQISAN (238 aa)). Residues 374–440 (QAKIGKTIQV…EYDLWATPVG (67 aa)) enclose the TRAM domain.

The protein belongs to the methylthiotransferase family. RimO subfamily. Requires [4Fe-4S] cluster as cofactor.

Its subcellular location is the cytoplasm. The catalysed reaction is L-aspartate(89)-[ribosomal protein uS12]-hydrogen + (sulfur carrier)-SH + AH2 + 2 S-adenosyl-L-methionine = 3-methylsulfanyl-L-aspartate(89)-[ribosomal protein uS12]-hydrogen + (sulfur carrier)-H + 5'-deoxyadenosine + L-methionine + A + S-adenosyl-L-homocysteine + 2 H(+). Functionally, catalyzes the methylthiolation of an aspartic acid residue of ribosomal protein uS12. The protein is Ribosomal protein uS12 methylthiotransferase RimO of Hydrogenovibrio crunogenus (strain DSM 25203 / XCL-2) (Thiomicrospira crunogena).